The primary structure comprises 392 residues: Norsolorinic acid reductase B (392 aa).

D75 contacts NADP(+). Y80 serves as the catalytic Proton donor. NADP(+) is bound by residues S184–D185, Q210, G239–E249, and R311–N319. A disordered region spans residues G242 to K263. The segment covering E249–G261 has biased composition (basic and acidic residues).

Belongs to the aldo/keto reductase family. Aldo/keto reductase 2 subfamily.

It functions in the pathway mycotoxin biosynthesis. Norsolorinic acid reductase; part of the fragmented gene cluster that mediates the biosynthesis of dothistromin (DOTH), a polyketide toxin very similar in structure to the aflatoxin precursor, versicolorin B. The first step of the pathway is the conversion of acetate to norsolorinic acid (NOR) and requires the fatty acid synthase subunits hexA and hexB, as well as the polyketide synthase pksA. PksA combines a hexanoyl starter unit and 7 malonyl-CoA extender units to synthesize the precursor NOR. The hexanoyl starter unit is provided to the acyl-carrier protein (ACP) domain by the fungal fatty acid synthase hexA/hexB. The second step is the conversion of NOR to averantin (AVN) and requires the norsolorinic acid ketoreductase nor1, which catalyzes the dehydration of norsolorinic acid to form (1'S)-averantin. The cytochrome P450 monooxygenase avnA then catalyzes the hydroxylation of AVN to 5'hydroxyaverantin (HAVN). The next step is performed by adhA that transforms HAVN to averufin (AVF). Averufin might then be converted to hydroxyversicolorone by cypX and avfA. Hydroxyversicolorone is further converted versiconal hemiacetal acetate (VHA) by moxY. VHA is then the substrate for the versiconal hemiacetal acetate esterase est1 to yield versiconal (VAL). Versicolorin B synthase vbsA then converts VAL to versicolorin B (VERB) by closing the bisfuran ring. Then, the activity of the versicolorin B desaturase verB leads to versicolorin A (VERA). DotB, a predicted chloroperoxidase, may perform epoxidation of the A-ring of VERA. Alternatively, a cytochrome P450, such as cypX or avnA could catalyze this step. It is also possible that another, uncharacterized, cytochrome P450 enzyme is responsible for this step. Opening of the epoxide could potentially be achieved by the epoxide hydrolase epoA. However, epoA seems not to be required for DOTH biosynthesis, but other epoxide hydrolases may have the ability to complement this hydrolysis. Alternatively, opening of the epoxide ring could be achieved non-enzymatically. The next step is the deoxygenation of ring A to yield the 5,8-dihydroxyanthraquinone which is most likely catalyzed by the NADPH dehydrogenase encoded by ver1. The last stages of DOTH biosynthesis are proposed to involve hydroxylation of the bisfuran. OrdB and norB might have oxidative roles here. An alternative possibility is that cytochrome P450 monoogenases such as avnA and cypX might perform these steps in addition to previously proposed steps. This is Norsolorinic acid reductase B from Dothistroma septosporum (strain NZE10 / CBS 128990) (Red band needle blight fungus).